We begin with the raw amino-acid sequence, 436 residues long: uncharacterized protein (436 aa).

A helical membrane pass occupies residues 1–21 (MILLQVICTIWTCLFIPLLNA). 2 BNR repeats span residues 57–68 (WISSDSGENWEA) and 101–112 (YVTDDRGKSWRA). Residue Asn-157 is glycosylated (N-linked (GlcNAc...) asparagine). BNR repeat units follow at residues 229 to 240 (ALSTDGGKTFKK) and 394 to 405 (KISVDNGLTWSN).

Its subcellular location is the membrane. This is an uncharacterized protein from Saccharomyces cerevisiae (strain ATCC 204508 / S288c) (Baker's yeast).